A 207-amino-acid chain; its full sequence is Small ribosomal subunit protein uS3 (207 aa).

One can recognise a KH type-2 domain in the interval 17 to 86 (IDEYLEKELR…NPQIEVEEIK (70 aa)).

This sequence belongs to the universal ribosomal protein uS3 family. As to quaternary structure, part of the 30S ribosomal subunit.

Functionally, binds the lower part of the 30S subunit head. This is Small ribosomal subunit protein uS3 from Thermococcus sibiricus (strain DSM 12597 / MM 739).